The following is a 210-amino-acid chain: MTDDKKKGKFIVFEGLDRSGKSTQSKLLVEYLKNNNVEVKHLYFPNRETGIGQIISKYLKMENSMSNETIHLLFSANRWEHMNEIKSLLLKGIWVVCDRYAYSGVAYSSGALNLNKTWCMNPDQGLIKPDVVFYLNVPPNYAQNRSDYGEEIYEKVETQKKIYETYKHFAHEDYWINIDATRKIEDIHNDIVKEVTKIKVEPEEFNFLWS.

Position 17 (aspartate 17) interacts with dGMP. Residue aspartate 17 coordinates dTMP. ATP contacts are provided by arginine 18, serine 19, glycine 20, lysine 21, serine 22, and threonine 23. Residues arginine 47, phenylalanine 74, arginine 78, arginine 99, and tyrosine 107 each contribute to the dTMP site. DGMP-binding residues include phenylalanine 74, arginine 78, arginine 99, tyrosine 107, serine 108, and tyrosine 153. Residues 143–155 form an LID region; sequence QNRSDYGEEIYEK. Residue arginine 182 participates in ATP binding.

The protein belongs to the thymidylate kinase family. Homodimer. Binds two dTMP molecules per dimer. Binds only one dTGP molecule per dimer.

It catalyses the reaction dTMP + ATP = dTDP + ADP. It carries out the reaction dGMP + ATP = dGDP + ADP. It functions in the pathway pyrimidine metabolism; dTTP biosynthesis. Its activity is regulated as follows. Inhibited by deoxyguanosine (dG), deoxythymidine (dT) and azidothymidine (AZT). Catalyzes the phosphorylation of thymidine monophosphate (dTMP) to thymidine diphosphate (dTDP), the immediate precursor for the DNA building block dTTP. Can also phosphorylate dGMP and to a lesser extent GMP, dUMP and dIMP. Can use either ATP or dATP as phosphate donors in presence of Mg(2+). In Plasmodium falciparum (isolate 3D7), this protein is Thymidylate kinase.